The primary structure comprises 398 residues: Dual-specificity RNA methyltransferase RlmN (398 aa).

Glu119 acts as the Proton acceptor in catalysis. The region spanning 125–364 (EGDRATLCVS…TIVRKTRGDD (240 aa)) is the Radical SAM core domain. The cysteines at positions 132 and 369 are disulfide-linked. [4Fe-4S] cluster contacts are provided by Cys139, Cys143, and Cys146. Residues 193–194 (GE), Ser225, 247–249 (SLH), and Asn326 contribute to the S-adenosyl-L-methionine site. Residue Cys369 is the S-methylcysteine intermediate of the active site.

Belongs to the radical SAM superfamily. RlmN family. The cofactor is [4Fe-4S] cluster.

The protein localises to the cytoplasm. The catalysed reaction is adenosine(2503) in 23S rRNA + 2 reduced [2Fe-2S]-[ferredoxin] + 2 S-adenosyl-L-methionine = 2-methyladenosine(2503) in 23S rRNA + 5'-deoxyadenosine + L-methionine + 2 oxidized [2Fe-2S]-[ferredoxin] + S-adenosyl-L-homocysteine. It carries out the reaction adenosine(37) in tRNA + 2 reduced [2Fe-2S]-[ferredoxin] + 2 S-adenosyl-L-methionine = 2-methyladenosine(37) in tRNA + 5'-deoxyadenosine + L-methionine + 2 oxidized [2Fe-2S]-[ferredoxin] + S-adenosyl-L-homocysteine. Its function is as follows. Specifically methylates position 2 of adenine 2503 in 23S rRNA and position 2 of adenine 37 in tRNAs. m2A2503 modification seems to play a crucial role in the proofreading step occurring at the peptidyl transferase center and thus would serve to optimize ribosomal fidelity. The protein is Dual-specificity RNA methyltransferase RlmN of Yersinia enterocolitica serotype O:8 / biotype 1B (strain NCTC 13174 / 8081).